Consider the following 937-residue polypeptide: AP-2 complex subunit beta (937 aa).

Thr2 is subject to N-acetylthreonine. At Ser4 the chain carries Phosphoserine. Lys265 is subject to N6-acetyllysine. The tract at residues 593–617 (LPIHHGSTDAGDSPVGTTTTTNLEQ) is disordered. Polar residues predominate over residues 607–617 (VGTTTTTNLEQ). Tyr737 and Tyr928 each carry phosphotyrosine.

Belongs to the adaptor complexes large subunit family. In terms of assembly, adaptor protein complex 2 (AP-2) is a heterotetramer composed of two large adaptins (alpha-type subunit AP2A1 or AP2A2 and beta-type subunit AP2B1), a medium adaptin (mu-type subunit AP2M1) and a small adaptin (sigma-type subunit AP2S1). Interacts with EPN1. Interacts with EPS15; clathrin competes with EPS15. Interacts with SNAP91; clathrin competes with SNAP91. Interacts with CLTC; clathrin competes with EPS15, SNAP91 and PIP5K1C. Interacts with LDLRAP1. Interacts with AMPH and BIN1. Interacts with ARF6 (GDP-bound). Interacts (dephosphorylated at Tyr-737) with ARRB1; phosphorylation of AP2B1 at Tyr-737 disrupts the interaction. Interacts with SLC2A8. Interacts with SCYL1 and SCYL2. Interacts with TGFBR1 and TGFBR2. Interacts with PIP5K1C; clathrin competes with PIP5K1C. Interacts with DENND1B. Interacts with FCHO1. Interacts with RFTN1. Interacts with KIAA1107. Together with AP2A1 or AP2A2 and AP2M1, it interacts with ADAM10; this interaction facilitates ADAM10 endocytosis from the plasma membrane during long-term potentiation in hippocampal neurons. In terms of tissue distribution, expressed in the brain (at protein level).

The protein localises to the cell membrane. It localises to the membrane. Its subcellular location is the coated pit. In terms of biological role, component of the adaptor protein complex 2 (AP-2). Adaptor protein complexes function in protein transport via transport vesicles in different membrane traffic pathways. Adaptor protein complexes are vesicle coat components and appear to be involved in cargo selection and vesicle formation. AP-2 is involved in clathrin-dependent endocytosis in which cargo proteins are incorporated into vesicles surrounded by clathrin (clathrin-coated vesicles, CCVs) which are destined for fusion with the early endosome. The clathrin lattice serves as a mechanical scaffold but is itself unable to bind directly to membrane components. Clathrin-associated adaptor protein (AP) complexes which can bind directly to both the clathrin lattice and to the lipid and protein components of membranes are considered to be the major clathrin adaptors contributing the CCV formation. AP-2 also serves as a cargo receptor to selectively sort the membrane proteins involved in receptor-mediated endocytosis. AP-2 seems to play a role in the recycling of synaptic vesicle membranes from the presynaptic surface. AP-2 recognizes Y-X-X-[FILMV] (Y-X-X-Phi) and [ED]-X-X-X-L-[LI] endocytosis signal motifs within the cytosolic tails of transmembrane cargo molecules. AP-2 may also play a role in maintaining normal post-endocytic trafficking through the ARF6-regulated, non-clathrin pathway. During long-term potentiation in hippocampal neurons, AP-2 is responsible for the endocytosis of ADAM10. The AP-2 beta subunit acts via its C-terminal appendage domain as a scaffolding platform for endocytic accessory proteins; at least some clathrin-associated sorting proteins (CLASPs) are recognized by their [DE]-X(1,2)-F-X-X-[FL]-X-X-X-R motif. The AP-2 beta subunit binds to clathrin heavy chain, promoting clathrin lattice assembly; clathrin displaces at least some CLASPs from AP2B1 which probably then can be positioned for further coat assembly. The polypeptide is AP-2 complex subunit beta (Ap2b1) (Mus musculus (Mouse)).